The sequence spans 203 residues: FMN-dependent NADH:quinone oxidoreductase (203 aa).

FMN-binding positions include Ser-9 and 15-17 (SKS).

Belongs to the azoreductase type 1 family. As to quaternary structure, homodimer. Requires FMN as cofactor.

The catalysed reaction is 2 a quinone + NADH + H(+) = 2 a 1,4-benzosemiquinone + NAD(+). It carries out the reaction N,N-dimethyl-1,4-phenylenediamine + anthranilate + 2 NAD(+) = 2-(4-dimethylaminophenyl)diazenylbenzoate + 2 NADH + 2 H(+). Quinone reductase that provides resistance to thiol-specific stress caused by electrophilic quinones. Functionally, also exhibits azoreductase activity. Catalyzes the reductive cleavage of the azo bond in aromatic azo compounds to the corresponding amines. This Bordetella avium (strain 197N) protein is FMN-dependent NADH:quinone oxidoreductase.